Here is a 401-residue protein sequence, read N- to C-terminus: S-adenosylmethionine synthase (401 aa).

135 to 140 (GHGSGD) lines the ATP pocket.

The protein belongs to the AdoMet synthase 2 family. Requires Mg(2+) as cofactor.

It carries out the reaction L-methionine + ATP + H2O = S-adenosyl-L-methionine + phosphate + diphosphate. Its pathway is amino-acid biosynthesis; S-adenosyl-L-methionine biosynthesis; S-adenosyl-L-methionine from L-methionine: step 1/1. Its function is as follows. Catalyzes the formation of S-adenosylmethionine from methionine and ATP. The polypeptide is S-adenosylmethionine synthase (mat) (Methanothermobacter marburgensis (strain ATCC BAA-927 / DSM 2133 / JCM 14651 / NBRC 100331 / OCM 82 / Marburg) (Methanobacterium thermoautotrophicum)).